The primary structure comprises 143 residues: Transcription antitermination protein NusB (143 aa).

Belongs to the NusB family.

Functionally, involved in transcription antitermination. Required for transcription of ribosomal RNA (rRNA) genes. Binds specifically to the boxA antiterminator sequence of the ribosomal RNA (rrn) operons. This Dehalococcoides mccartyi (strain ATCC BAA-2266 / KCTC 15142 / 195) (Dehalococcoides ethenogenes (strain 195)) protein is Transcription antitermination protein NusB.